The primary structure comprises 165 residues: Chorismate pyruvate-lyase (165 aa).

Met-35, Arg-77, Leu-115, and Glu-156 together coordinate substrate.

It belongs to the UbiC family. As to quaternary structure, monomer.

It is found in the cytoplasm. The enzyme catalyses chorismate = 4-hydroxybenzoate + pyruvate. It functions in the pathway cofactor biosynthesis; ubiquinone biosynthesis. Functionally, removes the pyruvyl group from chorismate, with concomitant aromatization of the ring, to provide 4-hydroxybenzoate (4HB) for the ubiquinone pathway. This chain is Chorismate pyruvate-lyase, found in Salmonella arizonae (strain ATCC BAA-731 / CDC346-86 / RSK2980).